The sequence spans 226 residues: Cytochrome c-553I (226 aa).

Residues 1-22 (MTSKTTASLLAICVACAASAIA) form the signal peptide. The disordered stretch occupies residues 43 to 68 (AAVSGDAHEQPAAEAPAEEEEETPAV). 4 residues coordinate heme: C125, C128, H129, and M173. A disordered region spans residues 203-226 (RGRPAKREDKSDEFVAQEDSCMSG).

Post-translationally, binds 1 heme group per subunit.

The protein localises to the periplasm. This is Cytochrome c-553I (cycB) from Paracoccus denitrificans.